The sequence spans 269 residues: Meiotic drive suppressor wtf5 (269 aa).

The interval 1–65 (MKNNYTSLKS…NTHRENHSYG (65 aa)) is disordered. Positions 19–30 (KTDHEIDLEKGP) are enriched in basic and acidic residues. 3 helical membrane passes run 73–95 (LLIILLISFTSIILFNAPEVCYL), 110–132 (WTLFGFWCLVCTLALIFLTYFYE), and 206–228 (WGLKCSLADHIIFVVLSILVFIA).

The protein belongs to the WTF family. Homomer. Interacts with other proteins that exhibit high sequence similarity.

The protein resides in the spore membrane. It is found in the vacuole membrane. Its function is as follows. Acts as a suppressor component of the dual wtf meiotic drive system, and can suppress but not confer meiotic drive by compatible poisons. Wtf meiotic drive systems promote unequal transmission of alleles from the parental zygote to progeny spores by encoding a poison and an antidote from the same locus; the poison is trans-acting and forms toxic aggregates in all spores within an ascus, wherease the antidote is spore-specific and targets aggregates for degradation by the vacuole. Meiotic drive by wtf systems therefore lead to poisoning of all progeny that do not inherit the dual poison/antidote allele, or express a compatible antidote. This chain is Meiotic drive suppressor wtf5, found in Schizosaccharomyces pombe (strain 972 / ATCC 24843) (Fission yeast).